The sequence spans 159 residues: Heat shock protein beta-9 (159 aa).

In terms of domain architecture, sHSP spans 36–147 (LLRDSPAAQE…EAQTGPSPRL (112 aa)).

It belongs to the small heat shock protein (HSP20) family. As to expression, testis specific.

Its subcellular location is the cytoplasm. The protein localises to the nucleus. The polypeptide is Heat shock protein beta-9 (HSPB9) (Homo sapiens (Human)).